The chain runs to 516 residues: GPI mannosyltransferase 4 (516 aa).

Over 1–5 (MMRYQ) the chain is Lumenal. Residues 6–26 (WWLYLVYAIGLMLCLGPSYIH) traverse the membrane as a helical segment. Residues 27–60 (PDEHFQCIEILAMQFMKVKGTIPWEFKSKFAARS) lie on the Cytoplasmic side of the membrane. A helical transmembrane segment spans residues 61–81 (YGPLLLVYGPLFTILESFPEI). The Lumenal portion of the chain corresponds to 82-175 (QDNPALILYS…IQRSNFKNSV (94 aa)). The helical transmembrane segment at 176–196 (ILGLIFSFGVFNRVTFPAFIF) threads the bilayer. The Cytoplasmic segment spans residues 197 to 210 (LPCLILFWKFYRVH). The chain crosses the membrane as a helical span at residues 211-231 (WKSFSLLLLSFSFSSCLFVLI). Topologically, residues 232-270 (DTNIYNNGKGFVITPLNNLKYNLNVQNLQVHGLHPRYTH) are lumenal. Residues 271–291 (LLVNLPQIVGPVLLLAIFSGY) traverse the membrane as a helical segment. The Cytoplasmic portion of the chain corresponds to 292 to 295 (KLDK). The chain crosses the membrane as a helical span at residues 296 to 316 (LSTYAIISGLLFLSFFQHQEL). Arg317 is a topological domain (lumenal). A helical transmembrane segment spans residues 318 to 338 (FLVPLVPLLVTNLNWTPLSST). Residues 339–348 (LVNKKIFKGT) are Cytoplasmic-facing. Residues 349 to 369 (WLLFNIIMAFIMGISHQAGII) traverse the membrane as a helical segment. The Lumenal portion of the chain corresponds to 370–516 (QFLGDYFHFR…GLTVYSIELL (147 aa)). N-linked (GlcNAc...) asparagine glycosylation is found at Asn403 and Asn452.

It belongs to the glycosyltransferase 22 family. PIGZ subfamily.

The protein localises to the endoplasmic reticulum membrane. It functions in the pathway glycolipid biosynthesis; glycosylphosphatidylinositol-anchor biosynthesis. Alpha-1,2-mannosyltransferase involved in glycosylphosphatidylinositol-anchor biosynthesis. Transfers a fourth mannose to trimannosyl-GPIs during GPI precursor assembly. The presence of a fourth mannose in GPI is essential in fungi. Involved in plasmid maintenance with SMP2. This is GPI mannosyltransferase 4 (SMP3) from Saccharomyces cerevisiae (strain ATCC 204508 / S288c) (Baker's yeast).